Reading from the N-terminus, the 178-residue chain is MARVEIEIPDDVTAEVDHLDLTVEGPEGSVTRRLWYPDVDVSVEDDAVVVASEVDDAKTDSTVGTFESHVANMFHGVSEGWEYKLEVHYSHFPMQVDVEGEEVVIQNFLGEKAARRTQIRGDTDVVVDDEEVTLSGPSIEDVGQTAADIEQLTRVTDKDTRVFQDGVYIVEKPAKGGA.

Belongs to the universal ribosomal protein uL6 family. Part of the 50S ribosomal subunit.

Its function is as follows. This protein binds to the 23S rRNA, and is important in its secondary structure. It is located near the subunit interface in the base of the L7/L12 stalk, and near the tRNA binding site of the peptidyltransferase center. The protein is Large ribosomal subunit protein uL6 of Halobacterium salinarum (strain ATCC 700922 / JCM 11081 / NRC-1) (Halobacterium halobium).